A 113-amino-acid polypeptide reads, in one-letter code: Large ribosomal subunit protein uL22 (113 aa).

It belongs to the universal ribosomal protein uL22 family. Part of the 50S ribosomal subunit.

Functionally, this protein binds specifically to 23S rRNA; its binding is stimulated by other ribosomal proteins, e.g. L4, L17, and L20. It is important during the early stages of 50S assembly. It makes multiple contacts with different domains of the 23S rRNA in the assembled 50S subunit and ribosome. In terms of biological role, the globular domain of the protein is located near the polypeptide exit tunnel on the outside of the subunit, while an extended beta-hairpin is found that lines the wall of the exit tunnel in the center of the 70S ribosome. This chain is Large ribosomal subunit protein uL22, found in Geobacillus kaustophilus (strain HTA426).